A 287-amino-acid chain; its full sequence is ATP synthase gamma chain (287 aa).

The protein belongs to the ATPase gamma chain family. F-type ATPases have 2 components, CF(1) - the catalytic core - and CF(0) - the membrane proton channel. CF(1) has five subunits: alpha(3), beta(3), gamma(1), delta(1), epsilon(1). CF(0) has three main subunits: a, b and c.

The protein resides in the cell inner membrane. Produces ATP from ADP in the presence of a proton gradient across the membrane. The gamma chain is believed to be important in regulating ATPase activity and the flow of protons through the CF(0) complex. In Salmonella paratyphi A (strain ATCC 9150 / SARB42), this protein is ATP synthase gamma chain.